A 605-amino-acid polypeptide reads, in one-letter code: Adenine deaminase (605 aa).

Belongs to the metallo-dependent hydrolases superfamily. Adenine deaminase family. Mn(2+) serves as cofactor.

It catalyses the reaction adenine + H2O + H(+) = hypoxanthine + NH4(+). This is Adenine deaminase from Staphylothermus marinus (strain ATCC 43588 / DSM 3639 / JCM 9404 / F1).